A 417-amino-acid chain; its full sequence is Acetyltransferase cdmC (417 aa).

A glycan (N-linked (GlcNAc...) asparagine) is linked at Asn64. Transmembrane regions (helical) follow at residues 308–328 (IPDGYIGPSLFYMSFVGGYLV), 357–377 (GIFWVATFLTVTTPWWIYPLL), and 389–409 (LVESVGMNNALAMIGVGAFIL).

This sequence belongs to the wax synthase family.

The protein resides in the membrane. The catalysed reaction is chrodrimanin A + acetyl-CoA = chrodrimanin B + CoA. It participates in secondary metabolite biosynthesis; terpenoid biosynthesis. Its function is as follows. Acetyltransferase; part of the gene cluster that mediates the biosynthesis of chrodrimanin B, a meroterpenoid that acts as a potent blocker of insect GABA-gated chloride channels. The first step of the pathway is the biosynthesis of 6-hydroxymellein by the polyketide synthase cdmE. The prenyltransferase cdmH acts as a 6-hydroxymellein 5-farnesyltransferase and produces the hydrophobic metabolite verruculide C. The FAD-dependent monooxygenase cdmI further converts verruculide C into verruculide B. The terpene cyclase cdmG then produced the pentacyclic molecule 3-hydroxypentacecilide A, the backbone structure of chrodrimanin B, via folding the farnesyl moiety of the substrate into the chair-boat conformation. The short-chain dehydrogenase/reductase cdmF functions as the 3-OH dehydrogenase that oxidizes the C-3 hydroxyl group of 3-hydroxypentacecilide A and produces chrodrimanin C, the dehydrogenated product of 3-hydroxypentacecilide A. The cytochrome P450 monooxygenase cdmJ then accepts both 3-hydroxypentacecilide A and chrodrimanin C and functions as a C-7-beta-hydroxylase to produce respectively chrodrimanin H and chrodrimanin F. The dioxygenase cdmA accepts chrodrimanin H to afford chrodrimanin E, which is further transformed to chrodrimanin A by the dioxygenase cdmD. CdmA can also accept chrodrimanin C as substrate to convert it into verruculide A, which is further converted into chrodrimanin T by cdmD. The last step of the biosynthesis is proposed to be performed by the acetyltransferase cdmC which acetylates chrodrimanin A to yield chrodrimanin B. The pathway may also lead to the production of additional shunt products, including chrodrimanins T and U. This chain is Acetyltransferase cdmC, found in Talaromyces verruculosus (Penicillium verruculosum).